Consider the following 477-residue polypeptide: Ribulose bisphosphate carboxylase large chain (477 aa).

Positions 1 to 2 (MS) are excised as a propeptide. Residue proline 3 is modified to N-acetylproline. Lysine 14 carries the N6,N6,N6-trimethyllysine modification. Substrate contacts are provided by asparagine 123 and threonine 173. The Proton acceptor role is filled by lysine 175. Lysine 177 lines the substrate pocket. Residues lysine 201, aspartate 203, and glutamate 204 each coordinate Mg(2+). At lysine 201 the chain carries N6-carboxylysine. Histidine 294 (proton acceptor) is an active-site residue. Residues arginine 295, histidine 327, and serine 379 each coordinate substrate.

The protein belongs to the RuBisCO large chain family. Type I subfamily. In terms of assembly, heterohexadecamer of 8 large chains and 8 small chains; disulfide-linked. The disulfide link is formed within the large subunit homodimers. The cofactor is Mg(2+). The disulfide bond which can form in the large chain dimeric partners within the hexadecamer appears to be associated with oxidative stress and protein turnover.

The protein localises to the plastid. It localises to the chloroplast. It catalyses the reaction 2 (2R)-3-phosphoglycerate + 2 H(+) = D-ribulose 1,5-bisphosphate + CO2 + H2O. It carries out the reaction D-ribulose 1,5-bisphosphate + O2 = 2-phosphoglycolate + (2R)-3-phosphoglycerate + 2 H(+). Functionally, ruBisCO catalyzes two reactions: the carboxylation of D-ribulose 1,5-bisphosphate, the primary event in carbon dioxide fixation, as well as the oxidative fragmentation of the pentose substrate in the photorespiration process. Both reactions occur simultaneously and in competition at the same active site. This Dioscorea elephantipes (Elephant's foot yam) protein is Ribulose bisphosphate carboxylase large chain.